The following is a 267-amino-acid chain: MTYFEAFFLALLQGFTEFLPISSSAHLILPSAILGWSDQGLAFDVAVHVGTLAAVVIYFRKEVVTLLTAWVGSIVKKEHNKESNLAWLIVLATIPAALFGLLFKDFIEIYLRSAWVIAATTIVFGLLLWWVDKNATLAKDEYQMTWKKALFLGIAQAMAMIPGTSRSGITITAALYLGFTREAAARFSFLMSIPIITLAGSYLGLKLAMSDISIHLGLLSTGVIVSFISAYICIHFFLKLISSMGMMPFVIYRILLGSSLLVWLALH.

The next 8 membrane-spanning stretches (helical) occupy residues 1-21 (MTYF…FLPI), 39-59 (QGLA…VIYF), 83-103 (SNLA…GLLF), 111-131 (LRSA…LWWV), 149-169 (ALFL…RSGI), 189-209 (FLMS…KLAM), 218-238 (LLST…HFFL), and 246-266 (MMPF…WLAL).

This sequence belongs to the UppP family.

It is found in the cell inner membrane. The catalysed reaction is di-trans,octa-cis-undecaprenyl diphosphate + H2O = di-trans,octa-cis-undecaprenyl phosphate + phosphate + H(+). In terms of biological role, catalyzes the dephosphorylation of undecaprenyl diphosphate (UPP). Confers resistance to bacitracin. The sequence is that of Undecaprenyl-diphosphatase from Aliivibrio fischeri (strain ATCC 700601 / ES114) (Vibrio fischeri).